The primary structure comprises 217 residues: Uracil-DNA glycosylase (217 aa).

D62 functions as the Proton acceptor in the catalytic mechanism.

This sequence belongs to the uracil-DNA glycosylase (UDG) superfamily. UNG family.

The protein localises to the cytoplasm. The catalysed reaction is Hydrolyzes single-stranded DNA or mismatched double-stranded DNA and polynucleotides, releasing free uracil.. Its function is as follows. Excises uracil residues from the DNA which can arise as a result of misincorporation of dUMP residues by DNA polymerase or due to deamination of cytosine. This chain is Uracil-DNA glycosylase, found in Streptococcus pyogenes serotype M49 (strain NZ131).